The sequence spans 345 residues: D-fructose 1,6-bisphosphatase class 2/sedoheptulose 1,7-bisphosphatase (345 aa).

Asp33, Glu57, Asp97, and Glu100 together coordinate Mn(2+). Substrate contacts are provided by residues 100 to 102 (EGT), Tyr131, 176 to 178 (RPR), and 198 to 200 (DGD). Residue Glu225 participates in Mn(2+) binding.

This sequence belongs to the FBPase class 2 family. As to quaternary structure, homotetramer. Mn(2+) serves as cofactor.

It carries out the reaction beta-D-fructose 1,6-bisphosphate + H2O = beta-D-fructose 6-phosphate + phosphate. It catalyses the reaction D-sedoheptulose 1,7-bisphosphate + H2O = D-sedoheptulose 7-phosphate + phosphate. It participates in carbohydrate biosynthesis; Calvin cycle. Functionally, catalyzes the hydrolysis of fructose 1,6-bisphosphate (Fru 1,6-P2) and sedoheptulose 1,7-bisphosphate (Sed 1,7-P2) to fructose 6-phosphate and sedoheptulose 7-phosphate, respectively. This Crocosphaera subtropica (strain ATCC 51142 / BH68) (Cyanothece sp. (strain ATCC 51142)) protein is D-fructose 1,6-bisphosphatase class 2/sedoheptulose 1,7-bisphosphatase.